A 150-amino-acid polypeptide reads, in one-letter code: Endoribonuclease YbeY (150 aa).

Zn(2+) contacts are provided by His-113, His-117, and His-123.

This sequence belongs to the endoribonuclease YbeY family. Zn(2+) serves as cofactor.

It localises to the cytoplasm. Single strand-specific metallo-endoribonuclease involved in late-stage 70S ribosome quality control and in maturation of the 3' terminus of the 16S rRNA. This chain is Endoribonuclease YbeY, found in Syntrophotalea carbinolica (strain DSM 2380 / NBRC 103641 / GraBd1) (Pelobacter carbinolicus).